The sequence spans 494 residues: MHTQPQSYQAPEQTHMRIENRRIEAGKGGTNLLLIIESRVDTLSINLPTLYSLLFTTNITILMSAPQHRQLRRAAHITKIASIDLCSLEEEDHEDLVLEESGHHPSDIQNEKPNRPPYSTLIRKRSGKVFRFVRPKLADLWHSRYHEASFDLGRRLGIGRRTQSCCEDVCDEEVSVETMAITALPMDVWLKERLKKWVQLSGHEGSIVPATPHTLYKKQCANCGEGRAYKNISKDPALDGFTPKYYDELEKNEEHFIEIEDLLQQFHDPTKTAIMDIKIGTRTFLESEVSNTKKRADLYEKMVAIDNDEPTEEERKCGAITKLRYMQFRERESSTAQLGFRIEAAKRLEGALEKNFKKVRTVEDVTTTFMDFFGTQRSRVRQQLIERLKSMRKAIEHSSFFNSHEVVGSSILIVFDTEKVGCWMIDFAKSSPVPNGRTLNHRTTWIPGNNEDGYLIGIDNLVKILEELPEYGEHPDDQLMVTEEVIARMKNTKS.

Residues serine 206, lysine 218, 260–262 (EDL), and aspartate 276 contribute to the ATP site. Substrate is bound by residues lysine 278 and 322 to 329 (KLRYMQFR). ATP is bound by residues lysine 346 and aspartate 426. A substrate-binding site is contributed by lysine 429.

Belongs to the inositol phosphokinase (IPK) family. As to expression, expressed in spermatheca.

It carries out the reaction 1D-myo-inositol 1,4,5-trisphosphate + ATP = 1D-myo-inositol 1,3,4,5-tetrakisphosphate + ADP + H(+). Its activity is regulated as follows. Unlike mammalian IP3K, may not be regulated by calmodulin. Probably by regulating inositol 1,4,5-trisphosphate levels, negatively regulates posterior body wall muscle contractions required for defecation and let-23 signaling pathway that controls spermathecal dilation and ovulation. May also regulate ovulation downstream of actin cross-linker fln-1. This is Inositol-trisphosphate 3-kinase homolog from Caenorhabditis elegans.